The primary structure comprises 291 residues: Transmembrane protein 41B (291 aa).

Positions 1–39 are disordered; it reads MAKGRVAERSQLGAHHTTPVGDGAAGTRGLAAPGSRDHQ. T18 bears the Phosphothreonine mark. S35 is modified (phosphoserine). Helical transmembrane passes span 52 to 72, 109 to 129, 147 to 169, 197 to 217, 225 to 245, and 262 to 282; these read MSLLILVSIFLSAAFVMFLVY, FYVQVLVAYFATYIFLQTFAI, LALFLVCLCSGLGASFCYMLSYL, LINYIIFLRITPFLPNWFINI, PLKVFFIGTFLGVAPPSFVAI, and SWNSIFILMILAVLSILPAIF. The interval 140 to 251 is VTT domain; required for its function in autophagy; that stretch reads GFLYPFPLAL…FVAIKAGTTL (112 aa).

The protein belongs to the TMEM41 family. Interacts with VMP1. Interacts with COPA, COPB1, VDAC1 and ERLIN2. Interacts with ATG2A. Interacts with SURF4. As to quaternary structure, (Microbial infection) Interacts with Zika virus NS4A protein and Yellow fever virus NS4B protein.

It is found in the endoplasmic reticulum membrane. The protein resides in the endomembrane system. It localises to the cytoplasm. The catalysed reaction is a 1,2-diacyl-sn-glycero-3-phospho-L-serine(in) = a 1,2-diacyl-sn-glycero-3-phospho-L-serine(out). It catalyses the reaction cholesterol(in) = cholesterol(out). It carries out the reaction a 1,2-diacyl-sn-glycero-3-phosphocholine(in) = a 1,2-diacyl-sn-glycero-3-phosphocholine(out). The enzyme catalyses a 1,2-diacyl-sn-glycero-3-phosphoethanolamine(in) = a 1,2-diacyl-sn-glycero-3-phosphoethanolamine(out). Functionally, phospholipid scramblase involved in lipid homeostasis and membrane dynamics processes. Has phospholipid scramblase activity toward cholesterol and phosphatidylserine, as well as phosphatidylethanolamine and phosphatidylcholine. Required for autophagosome formation: participates in early stages of autophagosome biogenesis at the endoplasmic reticulum (ER) membrane by reequilibrating the leaflets of the ER as lipids are extracted by ATG2 (ATG2A or ATG2B) to mediate autophagosome assembly. In addition to autophagy, involved in other processes in which phospholipid scramblase activity is required. Required for normal motor neuron development. (Microbial infection) Critical host factor required for infection by human coronaviruses SARS-CoV-2, HCoV-OC43, HCoV-NL63, and HCoV-229E, as well as all flaviviruses tested such as Zika virus and Yellow fever virus. Required post-entry of the virus to facilitate the ER membrane remodeling necessary to form replication organelles. In Homo sapiens (Human), this protein is Transmembrane protein 41B.